A 504-amino-acid polypeptide reads, in one-letter code: L-amino-acid oxidase (504 aa).

The first 18 residues, 1–18, serve as a signal peptide directing secretion; that stretch reads MNIFFMFSLLFLATLGSC. Cys-28 and Cys-191 are oxidised to a cystine. FAD-binding positions include 61-62, 81-82, Arg-89, and 105-108; these read MS, EA, and GPMR. Residue Arg-108 coordinates substrate. A glycan (N-linked (GlcNAc...) asparagine) is linked at Asn-190. A substrate-binding site is contributed by His-241. An FAD-binding site is contributed by Val-279. Cys-349 and Cys-430 form a disulfide bridge. N-linked (GlcNAc...) asparagine glycosylation is present at Asn-379. Tyr-390 contacts substrate. Residues Glu-475 and 482–487 each bind FAD; that span reads GWIDST. Substrate is bound at residue 482-483; the sequence is GW.

Belongs to the flavin monoamine oxidase family. FIG1 subfamily. In terms of assembly, homodimer; non-covalently linked. FAD is required as a cofactor. As to expression, expressed by the venom gland.

It localises to the secreted. It catalyses the reaction an L-alpha-amino acid + O2 + H2O = a 2-oxocarboxylate + H2O2 + NH4(+). Functionally, catalyzes an oxidative deamination of predominantly hydrophobic and aromatic L-amino acids, thus producing hydrogen peroxide that may contribute to the diverse toxic effects of this enzyme. Exhibits diverse biological activities, such as hemorrhage, hemolysis, edema, apoptosis of vascular endothelial cells or tumor cell lines, antibacterial and antiparasitic activities, as well as regulation of platelet aggregation. Its effect on platelets is controversial, since it either induces aggregation or inhibits agonist-induced aggregation. These different effects are probably due to different experimental conditions. In Echis ocellatus (Ocellated saw-scaled viper), this protein is L-amino-acid oxidase.